We begin with the raw amino-acid sequence, 411 residues long: LL-diaminopimelate aminotransferase (411 aa).

Positions 15 and 42 each coordinate substrate. Pyridoxal 5'-phosphate is bound by residues Y72, 108-109, Y132, N187, Y218, and 246-248; these read SK and SFS. Residues K109, Y132, and N187 each coordinate substrate. Position 249 is an N6-(pyridoxal phosphate)lysine (K249). R257 and N292 together coordinate pyridoxal 5'-phosphate. Residues N292 and R388 each coordinate substrate.

It belongs to the class-I pyridoxal-phosphate-dependent aminotransferase family. LL-diaminopimelate aminotransferase subfamily. Homodimer. Pyridoxal 5'-phosphate is required as a cofactor.

It carries out the reaction (2S,6S)-2,6-diaminopimelate + 2-oxoglutarate = (S)-2,3,4,5-tetrahydrodipicolinate + L-glutamate + H2O + H(+). It participates in amino-acid biosynthesis; L-lysine biosynthesis via DAP pathway; LL-2,6-diaminopimelate from (S)-tetrahydrodipicolinate (aminotransferase route): step 1/1. Functionally, involved in the synthesis of meso-diaminopimelate (m-DAP or DL-DAP), required for both lysine and peptidoglycan biosynthesis. Catalyzes the direct conversion of tetrahydrodipicolinate to LL-diaminopimelate. The polypeptide is LL-diaminopimelate aminotransferase (Nostoc punctiforme (strain ATCC 29133 / PCC 73102)).